Consider the following 164-residue polypeptide: HTH-type transcriptional regulator IscR (164 aa).

Residues 2–131 enclose the HTH rrf2-type domain; sequence RLTSKGRYAV…NNITLAELVN (130 aa). The segment at residues 28–51 is a DNA-binding region (H-T-H motif); that stretch reads LADISERQGISLSYLEQLFSRLRK. Residues C92, C98, and C104 each contribute to the [2Fe-2S] cluster site. Positions 143–164 are disordered; it reads NNDTRRTANGRPQETINVNLRA. Residues 152–164 are compositionally biased toward polar residues; that stretch reads GRPQETINVNLRA.

The cofactor is [2Fe-2S] cluster.

Regulates the transcription of several operons and genes involved in the biogenesis of Fe-S clusters and Fe-S-containing proteins. The polypeptide is HTH-type transcriptional regulator IscR (Yersinia enterocolitica serotype O:8 / biotype 1B (strain NCTC 13174 / 8081)).